We begin with the raw amino-acid sequence, 428 residues long: Methyl-branched lipid omega-hydroxylase (428 aa).

Position 379 (cysteine 379) interacts with heme.

Belongs to the cytochrome P450 family. Heme is required as a cofactor.

The enzyme catalyses a methyl-branched lipid + O2 + 2 reduced ferredoxin [iron-sulfur] cluster + 2 H(+) = an omega-hydroxy-methyl-branched lipid + H2O + 2 oxidized ferredoxin [iron-sulfur] cluster.. It carries out the reaction cholest-4-en-3-one + 6 reduced [2Fe-2S]-[ferredoxin] + 3 O2 + 5 H(+) = (25R)-3-oxocholest-4-en-26-oate + 6 oxidized [2Fe-2S]-[ferredoxin] + 4 H2O. The protein operates within lipid metabolism; branched-chain fatty acid metabolism. Functionally, primarily hydroxylates the omega-carbon of a number of methyl-branched lipids, including (2E,6E)-farnesol, phytanate, geranylgeraniol, 15-methylpalmitate and (2E,6E)-farnesyl diphosphate. Also catalyzes the sequential oxidation of the terminal methyl of cholest-4-en-3-one into (25R)-26-hydroxycholest-4-en-3-one (alcohol), (25R)-26-oxocholest-4-en-3-one (aldehyde), to finally yield the carboxylic acid (25R)-3-oxocholest-4-en-26-oate. Also able to sequentially oxidize cholesterol itself, not only cholest-4-en-3-one. The sequence is that of Methyl-branched lipid omega-hydroxylase (cyp124) from Mycobacterium bovis (strain ATCC BAA-935 / AF2122/97).